The following is a 237-amino-acid chain: Probable transcriptional regulatory protein Mfl546 (237 aa).

Positions 1 to 20 (MGRAHEVRAASMAKTAAKKS) are disordered. A compositionally biased stretch (low complexity) spans 9 to 20 (AASMAKTAAKKS).

The protein belongs to the TACO1 family.

Its subcellular location is the cytoplasm. The sequence is that of Probable transcriptional regulatory protein Mfl546 from Mesoplasma florum (strain ATCC 33453 / NBRC 100688 / NCTC 11704 / L1) (Acholeplasma florum).